Consider the following 220-residue polypeptide: Fructose-6-phosphate aldolase 2 (220 aa).

Catalysis depends on Lys-85, which acts as the Schiff-base intermediate with substrate.

The protein belongs to the transaldolase family. Type 3A subfamily. In terms of assembly, homodecamer.

The protein localises to the cytoplasm. It catalyses the reaction beta-D-fructose 6-phosphate = dihydroxyacetone + D-glyceraldehyde 3-phosphate. Its function is as follows. Catalyzes the reversible formation of fructose 6-phosphate from dihydroxyacetone and D-glyceraldehyde 3-phosphate via an aldolization reaction. Can utilize hydroxyacetone as an alternative donor substrate. Is also able to catalyze the direct self-aldol addition of glycolaldehyde. Is less catalytically efficient than the isozyme FsaA. Does not display transaldolase activity. The chain is Fructose-6-phosphate aldolase 2 (fsaB) from Escherichia coli (strain K12).